The primary structure comprises 389 residues: Chalcone synthase 4-1 (389 aa).

Cys164 is a catalytic residue.

The protein belongs to the thiolase-like superfamily. Chalcone/stilbene synthases family.

The catalysed reaction is (E)-4-coumaroyl-CoA + 3 malonyl-CoA + 3 H(+) = 2',4,4',6'-tetrahydroxychalcone + 3 CO2 + 4 CoA. It participates in secondary metabolite biosynthesis; flavonoid biosynthesis. The primary product of this enzyme is 4,2',4',6'-tetrahydroxychalcone (also termed naringenin-chalcone or chalcone) which can under specific conditions spontaneously isomerize into naringenin. This Medicago sativa (Alfalfa) protein is Chalcone synthase 4-1 (CHS4-1).